The sequence spans 353 residues: MSRDIIKLDQIDVTFHQKKRTITAVKDVTIHIQEGDIYGIVGYSGAGKSTLVRVINLLQKPSAGKITIDDDVIFDGKVTLTAEQLRRKRQDIGMIFQHFNLMSQKTAEENVAFALKHSGLSKEEKKAKVAKLLDLVGLADRAENYPSQLSGGQKQRVAIARALANDPKILISDESTSALDPKTTKQILALLQDLNQKLGLTVVLITHEMQIVKDIANRVAVMQDGHLIEEGSVLEIFSNPKQPLTQDFISTATGIDEAMVKIEKQEIVEHLSENSLLVQLKYAGASTDEPLLNELYKHYQVMANILYGNIEILDGTPVGELVVVLSGEKAALAGAQEAIRQAGVQLKVLKGVQ.

Residues 8–249 form the ABC transporter domain; sequence LDQIDVTFHQ…PKQPLTQDFI (242 aa). 42–49 serves as a coordination point for ATP; the sequence is GYSGAGKS.

It belongs to the ABC transporter superfamily. Methionine importer (TC 3.A.1.24) family. In terms of assembly, the complex is composed of two ATP-binding proteins (MetN), two transmembrane proteins (MetI) and a solute-binding protein (MetQ).

Its subcellular location is the cell membrane. The enzyme catalyses L-methionine(out) + ATP + H2O = L-methionine(in) + ADP + phosphate + H(+). The catalysed reaction is D-methionine(out) + ATP + H2O = D-methionine(in) + ADP + phosphate + H(+). In terms of biological role, part of the ABC transporter complex MetNIQ involved in methionine import. Responsible for energy coupling to the transport system. This is Methionine import ATP-binding protein MetN from Streptococcus pneumoniae (strain ATCC BAA-255 / R6).